The primary structure comprises 408 residues: MVYQPACGARDILPLDVARQRWLEQRLERVFQSWGYQEIITPTIETLATLTAGGTVHPETVIQVQGSGDEPLGLRPELTASIARAAVTRMAGMQLPQRLYYKTNVFRRTTGAELGNQQEFFQAGVELLGATGLAADAEILWLVQECLGVLAVGEAYLLVGDAHLTQQLLGTFPAELQKTVRQCLANLDRVSLQALPAPWRDRALALFDLRGTPEEVGERLAQWSDVAGVVDRFAQLQQLLALVAESLAITLDLSLVQSFDYYTGIIFEVLIPTETELRLVAQGGRYDQLLSIYHPDGATVPGIGFVFNVEALLQAVAIPPAALLAPRSQWLVVPRTANALAAALHHAQTLRLDGSTRVELALLELTPEQIRAYARDRQIPYIAWIESDAPPQIEALSDGATSLQIQRV.

This sequence belongs to the class-II aminoacyl-tRNA synthetase family. HisZ subfamily. In terms of assembly, heteromultimer composed of HisG and HisZ subunits.

The protein resides in the cytoplasm. It functions in the pathway amino-acid biosynthesis; L-histidine biosynthesis; L-histidine from 5-phospho-alpha-D-ribose 1-diphosphate: step 1/9. Required for the first step of histidine biosynthesis. May allow the feedback regulation of ATP phosphoribosyltransferase activity by histidine. In Thermosynechococcus vestitus (strain NIES-2133 / IAM M-273 / BP-1), this protein is ATP phosphoribosyltransferase regulatory subunit.